A 347-amino-acid chain; its full sequence is GMP reductase (347 aa).

108 to 131 (DDFTKTRQILAMSTALRFICVDVA) serves as a coordination point for NADP(+). Residues glycine 181 and glycine 183 each contribute to the K(+) site. Cysteine 186 functions as the Thioimidate intermediate in the catalytic mechanism. 216–239 (IVGDGGCTCPGDVAKAFGGGADFV) serves as a coordination point for NADP(+).

Belongs to the IMPDH/GMPR family. GuaC type 1 subfamily. As to quaternary structure, homotetramer.

The catalysed reaction is IMP + NH4(+) + NADP(+) = GMP + NADPH + 2 H(+). Its function is as follows. Catalyzes the irreversible NADPH-dependent deamination of GMP to IMP. It functions in the conversion of nucleobase, nucleoside and nucleotide derivatives of G to A nucleotides, and in maintaining the intracellular balance of A and G nucleotides. This chain is GMP reductase, found in Aeromonas salmonicida (strain A449).